Reading from the N-terminus, the 274-residue chain is 4-diphosphocytidyl-2-C-methyl-D-erythritol kinase (274 aa).

Residue Lys-9 is part of the active site. 91–101 (PAGAGLGGGSS) is a binding site for ATP. The active site involves Asp-133.

This sequence belongs to the GHMP kinase family. IspE subfamily.

It catalyses the reaction 4-CDP-2-C-methyl-D-erythritol + ATP = 4-CDP-2-C-methyl-D-erythritol 2-phosphate + ADP + H(+). Its pathway is isoprenoid biosynthesis; isopentenyl diphosphate biosynthesis via DXP pathway; isopentenyl diphosphate from 1-deoxy-D-xylulose 5-phosphate: step 3/6. Its function is as follows. Catalyzes the phosphorylation of the position 2 hydroxy group of 4-diphosphocytidyl-2C-methyl-D-erythritol. This chain is 4-diphosphocytidyl-2-C-methyl-D-erythritol kinase, found in Persephonella marina (strain DSM 14350 / EX-H1).